The following is a 209-amino-acid chain: MELNSLLILLEAAEYLERRDREAEHGYASVLPFDGDFAREKTKAAGLVRKAPNNRSSHNELEKHRRAKLRLYLEQLKQLVPLGPDSTRHTTLSLLKRAKVHIKKLEEQDRRALSIKEQLQQEHRFLKRRLEQLSVQSVERVRTDSTGSAVSTDDSEQEVDIEGMEFGPGELDSVGSSSDADDHYSLQSGTGGDSGFGPHCRRLGRPALS.

Residues 6–23 (LLILLEAAEYLERRDREA) form an interaction with SIN3A and SIN3B region. The 53-residue stretch at 53–105 (NNRSSHNELEKHRRAKLRLYLEQLKQLVPLGPDSTRHTTLSLLKRAKVHIKKL) folds into the bHLH domain. Residues 140 to 209 (RVRTDSTGSA…CRRLGRPALS (70 aa)) form a disordered region. Residues 153 to 163 (DDSEQEVDIEG) show a composition bias toward acidic residues. Basic residues predominate over residues 199–209 (HCRRLGRPALS).

As to quaternary structure, efficient DNA binding requires dimerization with another bHLH protein. Binds DNA as a heterodimer with MAX. Interacts with SIN3A AND SIN3B. Interacts with RNF17.

It is found in the nucleus. Transcriptional repressor. Binds with MAX to form a sequence-specific DNA-binding protein complex which recognizes the core sequence 5'-CAC[GA]TG-3'. Antagonizes MYC transcriptional activity by competing for MAX and suppresses MYC dependent cell transformation. The sequence is that of Max dimerization protein 4 (MXD4) from Homo sapiens (Human).